Here is a 476-residue protein sequence, read N- to C-terminus: Deoxyguanosinetriphosphate triphosphohydrolase-like protein 2 (476 aa).

The tract at residues 1-20 (MYTDADRSREVVPEKDGHDK) is disordered. Residues 60–233 (RLTHSLEVAQ…MDLADDIAYS (174 aa)) enclose the HD domain.

The protein belongs to the dGTPase family. Type 2 subfamily.

This is Deoxyguanosinetriphosphate triphosphohydrolase-like protein 2 from Mesorhizobium japonicum (strain LMG 29417 / CECT 9101 / MAFF 303099) (Mesorhizobium loti (strain MAFF 303099)).